Here is a 179-residue protein sequence, read N- to C-terminus: Protein YjaZ (179 aa).

The polypeptide is Protein YjaZ (Escherichia coli (strain K12)).